The following is a 289-amino-acid chain: MRSAATLPYESNPSQGVQGCVRLSFVQRHGQSRLESLYHSDPMRVIIPQTPPGEPVHGVVVTTSGGLVGGDQLDIELIARPHTQLLVMTQAAEKVYRSTGADSTVQIALHVEAGAFLEWLPQETILFDQGRLRRTTQVYLGENARLLAGEMVLFGRSAHGEQLRQGLLRDSWLVHREGALVWADLLKLEGDLQHPLQHPAALAGAKGCATLLLAGEEAAQLLEPLRGWLAEAGMEGPSVKVAAGVVHGLLVVRWLGWDARLLRQGYGQMWSWLRGQLGRPARMPRLWDI.

It belongs to the UreD family. UreD, UreF and UreG form a complex that acts as a GTP-hydrolysis-dependent molecular chaperone, activating the urease apoprotein by helping to assemble the nickel containing metallocenter of UreC. The UreE protein probably delivers the nickel.

The protein localises to the cytoplasm. Required for maturation of urease via the functional incorporation of the urease nickel metallocenter. This is Urease accessory protein UreD from Magnetococcus marinus (strain ATCC BAA-1437 / JCM 17883 / MC-1).